Reading from the N-terminus, the 590-residue chain is V-type ATP synthase alpha chain (590 aa).

231–238 (GPFGSGKT) serves as a coordination point for ATP.

This sequence belongs to the ATPase alpha/beta chains family.

It catalyses the reaction ATP + H2O + 4 H(+)(in) = ADP + phosphate + 5 H(+)(out). In terms of biological role, produces ATP from ADP in the presence of a proton gradient across the membrane. The V-type alpha chain is a catalytic subunit. This is V-type ATP synthase alpha chain from Clostridium botulinum (strain Langeland / NCTC 10281 / Type F).